The chain runs to 115 residues: Large ribosomal subunit protein bL31B (115 aa).

Belongs to the bacterial ribosomal protein bL31 family. Type B subfamily. Part of the 50S ribosomal subunit.

The protein is Large ribosomal subunit protein bL31B of Polynucleobacter asymbioticus (strain DSM 18221 / CIP 109841 / QLW-P1DMWA-1) (Polynucleobacter necessarius subsp. asymbioticus).